The following is a 298-amino-acid chain: Ribosomal RNA small subunit methyltransferase H (298 aa).

Residues 38 to 40 (GGH), D57, F84, D100, and Q107 contribute to the S-adenosyl-L-methionine site.

Belongs to the methyltransferase superfamily. RsmH family.

It is found in the cytoplasm. It catalyses the reaction cytidine(1402) in 16S rRNA + S-adenosyl-L-methionine = N(4)-methylcytidine(1402) in 16S rRNA + S-adenosyl-L-homocysteine + H(+). In terms of biological role, specifically methylates the N4 position of cytidine in position 1402 (C1402) of 16S rRNA. This is Ribosomal RNA small subunit methyltransferase H from Acaryochloris marina (strain MBIC 11017).